The sequence spans 156 residues: Small ribosomal subunit protein uS7 (156 aa).

It belongs to the universal ribosomal protein uS7 family. In terms of assembly, part of the 30S ribosomal subunit. Contacts proteins S9 and S11.

Its function is as follows. One of the primary rRNA binding proteins, it binds directly to 16S rRNA where it nucleates assembly of the head domain of the 30S subunit. Is located at the subunit interface close to the decoding center, probably blocks exit of the E-site tRNA. The sequence is that of Small ribosomal subunit protein uS7 from Burkholderia ambifaria (strain MC40-6).